Here is a 921-residue protein sequence, read N- to C-terminus: MVIGLLKTLVGSRNDRLLKQYRKVVAKVGTFEANLQTLDDAALAAKTDEFKSRLASGESLDSIAPEAFAVVREASVRVMKMRHFDAQLMGGLALHQGKIAEMGTGEGKTLTATLPVYLNALTGKGVHVVTVNDYLAQRDAEWMSTLYNFLGMKVGVNLSQMDHTTKKEAYAADITYGTNNEFGFDYLRDNMVQDLEQRVQRGLAYAIVDEVDSILIDEARTPLIISGQADDHTDLYIKINALPSHLELQIGEEKSDGTGVEKPGDYWVDEKSQQVYLTERGHDKAEEVLVQLGALDDGASLYAPQNITLMHHVYAALRAHTLYHRDQQYVVQNGEVIIVDEFTGRLMQGRRWSDGLHQAVEAKEGVAIQNENQTLATITFQNYFRMYGKLAGMTGTADTEAYEFKEIYNLETVVIPPNRISQRKDKQDQIYKSSRERYDAVIKDIEDCYQRGQPVLVGTTSIENSELIAGLLDKRKLPHQVLNAKQHAREAEIIAQAGRPKMITIATNMAGRGTDIVLGGNVGKQSSLIQVDEALSDLEKAAKIKSLQDEWQSIHDQVLTAGGLHIIGTERHESRRIDNQLRGRSGRQGDPGSSRFYLSLDDPLLRIFAGDRLRAVMERLKMPDGEPIEAGMVTRSIESAQRKVEGRNFDIRKQLLEYDDVANDQRKETYRLRNEVLESADIGELIANLREDVLRTICSIYVPLESMEEQWDLAGLEHALASEWGLKVDLQKWVEGSDSVDDVEIVDRVLEAAKESYDAKVDLSGRQSFAGFERSVLLYSVDTHWREHLAALDHLRQGIHLRGYAQKDPKQEYRREAFELYGELLNVIKNDVVKNIMTVEIRSASELDQAAESMNEDLAKLSDVQYQHADPDMEVAGSTGDRGAALDIQPAPVRSGPKIGRNDPCSCGSGKKYKNCCGALS.

ATP contacts are provided by residues Gln87, 105-109, and Asp515; that span reads GEGKT. Residues 872–901 form a disordered region; sequence DMEVAGSTGDRGAALDIQPAPVRSGPKIGR. Zn(2+)-binding residues include Cys905, Cys907, Cys916, and Cys917.

The protein belongs to the SecA family. In terms of assembly, monomer and homodimer. Part of the essential Sec protein translocation apparatus which comprises SecA, SecYEG and auxiliary proteins SecDF-YajC and YidC. Requires Zn(2+) as cofactor.

The protein resides in the cell inner membrane. The protein localises to the cytoplasm. The enzyme catalyses ATP + H2O + cellular proteinSide 1 = ADP + phosphate + cellular proteinSide 2.. Part of the Sec protein translocase complex. Interacts with the SecYEG preprotein conducting channel. Has a central role in coupling the hydrolysis of ATP to the transfer of proteins into and across the cell membrane, serving both as a receptor for the preprotein-SecB complex and as an ATP-driven molecular motor driving the stepwise translocation of polypeptide chains across the membrane. The chain is Protein translocase subunit SecA from Polynucleobacter asymbioticus (strain DSM 18221 / CIP 109841 / QLW-P1DMWA-1) (Polynucleobacter necessarius subsp. asymbioticus).